The following is a 691-amino-acid chain: Amino-acid acetyltransferase, mitochondrial (691 aa).

Residues 1-27 are compositionally biased toward polar residues; that stretch reads MSSTSLAWPRTAKSSLLQSADFSSTSK. 2 disordered regions span residues 1–29 and 65–95; these read MSST…SKGY and RLKA…PSGV. Over residues 75–87 the composition is skewed to basic and acidic residues; the sequence is QVKEPEKESKDDA. The N-acetyltransferase domain occupies 512–681; sequence NRPRMSLDDP…YEAVCRSIQP (170 aa).

This sequence belongs to the acetyltransferase family.

Its subcellular location is the mitochondrion. It catalyses the reaction L-glutamate + acetyl-CoA = N-acetyl-L-glutamate + CoA + H(+). The protein operates within amino-acid biosynthesis; L-arginine biosynthesis; N(2)-acetyl-L-ornithine from L-glutamate: step 1/4. In terms of biological role, N-acetylglutamate synthase involved in arginine biosynthesis. The protein is Amino-acid acetyltransferase, mitochondrial (arg2) of Aspergillus terreus (strain NIH 2624 / FGSC A1156).